The chain runs to 205 residues: N-(5'-phosphoribosyl)anthranilate isomerase (205 aa).

This sequence belongs to the TrpF family.

The enzyme catalyses N-(5-phospho-beta-D-ribosyl)anthranilate = 1-(2-carboxyphenylamino)-1-deoxy-D-ribulose 5-phosphate. The protein operates within amino-acid biosynthesis; L-tryptophan biosynthesis; L-tryptophan from chorismate: step 3/5. The polypeptide is N-(5'-phosphoribosyl)anthranilate isomerase (Thermotoga petrophila (strain ATCC BAA-488 / DSM 13995 / JCM 10881 / RKU-1)).